A 92-amino-acid chain; its full sequence is Small ribosomal subunit protein uS19c (92 aa).

This sequence belongs to the universal ribosomal protein uS19 family.

It is found in the plastid. The protein localises to the chloroplast. Its function is as follows. Protein S19 forms a complex with S13 that binds strongly to the 16S ribosomal RNA. This Ceratophyllum demersum (Rigid hornwort) protein is Small ribosomal subunit protein uS19c.